The following is a 69-amino-acid chain: Cold shock-like protein CspC (69 aa).

One can recognise a CSD domain in the interval Gly-6–Val-66.

The protein localises to the cytoplasm. The polypeptide is Cold shock-like protein CspC (cspC) (Buchnera aphidicola subsp. Acyrthosiphon pisum (strain APS) (Acyrthosiphon pisum symbiotic bacterium)).